The sequence spans 511 residues: Caspase-8 (511 aa).

Positions 1 to 242 are excised as a propeptide; it reads MSGHNILTQL…MDGNGIANES (242 aa). Catalysis depends on residues histidine 352 and cysteine 393. Residues 406–415 constitute a propeptide that is removed on maturation; sequence KINASTKSPC.

It belongs to the peptidase C14A family. In terms of assembly, heterotetramer that consists of two anti-parallel arranged heterodimers, each one formed by a 15 kDa (caspase-8 subunit p15) and a 10 kDa (caspase-8 subunit p10) subunit. Interacts with the N-terminus of Fadd.

It localises to the cytoplasm. The catalysed reaction is Strict requirement for Asp at position P1 and has a preferred cleavage sequence of (Leu/Asp/Val)-Glu-Thr-Asp-|-(Gly/Ser/Ala).. In terms of biological role, effector of the programmed cell death (PCD) activators rpr, grim and W. May play an apoptotic role in the germline as well as soma. Role in immune response, required to resist Gram-negative bacterial infections by regulating DptA. Fadd interacts with Dredd, Fadd promotes cleavage of Dredd and is necessary and sufficient for enhancing Dredd-induced apoptosis. This chain is Caspase-8, found in Drosophila pseudoobscura pseudoobscura (Fruit fly).